The chain runs to 92 residues: Large ribosomal subunit protein uL23c (92 aa).

Belongs to the universal ribosomal protein uL23 family. As to quaternary structure, part of the 50S ribosomal subunit.

Its subcellular location is the plastid. The protein localises to the chloroplast. Binds to 23S rRNA. This is Large ribosomal subunit protein uL23c (rpl23) from Mesostigma viride (Green alga).